We begin with the raw amino-acid sequence, 406 residues long: Imidazolonepropionase (406 aa).

H65 and H67 together coordinate Fe(3+). H65 and H67 together coordinate Zn(2+). The 4-imidazolone-5-propanoate site is built by R74, Y137, and H170. Y137 is a binding site for N-formimidoyl-L-glutamate. H235 lines the Fe(3+) pocket. H235 contributes to the Zn(2+) binding site. Q238 lines the 4-imidazolone-5-propanoate pocket. Fe(3+) is bound at residue D310. D310 is a Zn(2+) binding site. Residues N312 and G314 each contribute to the N-formimidoyl-L-glutamate site. T315 contacts 4-imidazolone-5-propanoate.

It belongs to the metallo-dependent hydrolases superfamily. HutI family. The cofactor is Zn(2+). Fe(3+) is required as a cofactor.

The protein localises to the cytoplasm. The catalysed reaction is 4-imidazolone-5-propanoate + H2O = N-formimidoyl-L-glutamate. It functions in the pathway amino-acid degradation; L-histidine degradation into L-glutamate; N-formimidoyl-L-glutamate from L-histidine: step 3/3. Functionally, catalyzes the hydrolytic cleavage of the carbon-nitrogen bond in imidazolone-5-propanoate to yield N-formimidoyl-L-glutamate. It is the third step in the universal histidine degradation pathway. The sequence is that of Imidazolonepropionase from Vibrio vulnificus (strain CMCP6).